Reading from the N-terminus, the 578-residue chain is MSKIVAVTAGAKGVAHTHLAAEALSATAQALGHQIRVERHSAEGVEAPLQGAEIAAADVVLIAADLRIEDVRFVTKPVYRTSTARAVTQTAAVLAEALALTGEETPQMTTDTGQRPLRVVAITSCPTGIAHTFMAADALKKTAAARGWEIAVETQGSVGSQNALSAAQIQAADLVVIAADTHVDDSRFAGKKVYKTSVGAAVKGAAKVLDAALAEGVVLGTNLADTVDALKAQRAATRSGPYMHLLTGVSYMLPLVVAGGLLIALSFVFGIKAFEVEGTLPAALMAIGGGAAFKLMVPVLAGFIAYSIADRPGLTPGLIGGMLAVNLNAGFLGGIVAGFLAGYVARWLRDAIKLPRTLEGLKPVLILPLLSTAITGLIMVYVVGTPVAAILAAMTAFLQGLGTTNAVVLGLILGGMMAVDMGGPINKAAYTFAVGLLTSSTYAPMAAVMAAGMTPPLGLALATLVAKNRFTAEEREAGGAAAVLGLSFITEGAIPFAAKDPARVIPSIIVGSAITGALSMALGCLLVAPHGGIFVLAIPHAVTNLGLYALSIVVGTLVTTGLLIALKKPIPAEERARS.

PTS EIIB type-2 domains lie at 1-99 and 119-214; these read MSKI…EALA and VVAI…AALA. Catalysis depends on Cys125, which acts as the Phosphocysteine intermediate; for EIIB activity. Cys125 carries the post-translational modification Phosphocysteine; by EIIA. The 336-residue stretch at 241–576 folds into the PTS EIIC type-2 domain; it reads PYMHLLTGVS…KKPIPAEERA (336 aa). Helical transmembrane passes span 251–271, 284–304, 319–339, 364–384, 405–425, 428–450, 477–497, 518–538, and 545–565; these read YMLP…VFGI, LMAI…AGFI, IGGM…VAGF, VLIL…YVVG, NAVV…GGPI, AAYT…AVMA, AGGA…IPFA, LSMA…VLAI, and LGLY…LLIA.

The protein resides in the cell inner membrane. The enzyme catalyses D-fructose(out) + N(pros)-phospho-L-histidyl-[protein] = D-fructose 1-phosphate(in) + L-histidyl-[protein]. Functionally, the phosphoenolpyruvate-dependent sugar phosphotransferase system (sugar PTS), a major carbohydrate active transport system, catalyzes the phosphorylation of incoming sugar substrates concomitantly with their translocation across the cell membrane. The enzyme II FruAB PTS system is involved in fructose transport. The polypeptide is PTS system fructose-specific EIIB'BC component (Rhodobacter capsulatus (Rhodopseudomonas capsulata)).